A 72-amino-acid polypeptide reads, in one-letter code: Large ribosomal subunit protein uL29 (72 aa).

It belongs to the universal ribosomal protein uL29 family.

This chain is Large ribosomal subunit protein uL29, found in Caldicellulosiruptor saccharolyticus (strain ATCC 43494 / DSM 8903 / Tp8T 6331).